A 238-amino-acid polypeptide reads, in one-letter code: Lactate utilization protein A (238 aa).

The protein belongs to the LutA/YkgE family.

Is involved in L-lactate degradation and allows cells to grow with lactate as the sole carbon source. This Bacillus pumilus (strain SAFR-032) protein is Lactate utilization protein A.